The chain runs to 169 residues: Proepiregulin (169 aa).

The N-terminal stretch at 1-29 is a signal peptide; that stretch reads MTAGRRMEMLCAGRVPALLLCLGFHLLQA. The propeptide occupies 30 to 62; that stretch reads VLSTTVIPSCIPGESSDNCTALVQTEDNPRVAQ. An N-linked (GlcNAc...) asparagine glycan is attached at N47. Topologically, residues 60 to 119 are extracellular; the sequence is VAQVSITKCSSDMNGYCLHGQCIYLVDMSQNYCRCEVGYTGVRCEHFFLTVHQPLSKEYV. Residues 64–104 form the EGF-like domain; it reads SITKCSSDMNGYCLHGQCIYLVDMSQNYCRCEVGYTGVRCE. Disulfide bonds link C68/C81, C76/C92, and C94/C103. Positions 109-169 are cleaved as a propeptide — removed in mature form; sequence TVHQPLSKEY…TSGDPELPQV (61 aa). The chain crosses the membrane as a helical span at residues 120–140; that stretch reads ALTVILIILFLITVVGSTYYF. At 141–169 the chain is on the cytoplasmic side; sequence CRWYRNRKSKEPKKEYERVTSGDPELPQV.

As to quaternary structure, interacts with EGFR and ERBB4. In terms of tissue distribution, in normal adults, expressed predominantly in the placenta and peripheral blood leukocytes. High levels were detected in carcinomas of the bladder, lung, kidney and colon.

It is found in the secreted. The protein resides in the extracellular space. Its subcellular location is the cell membrane. Functionally, ligand of the EGF receptor/EGFR and ERBB4. Stimulates EGFR and ERBB4 tyrosine phosphorylation. Contributes to inflammation, wound healing, tissue repair, and oocyte maturation by regulating angiogenesis and vascular remodeling and by stimulating cell proliferation. This is Proepiregulin (EREG) from Homo sapiens (Human).